Here is a 541-residue protein sequence, read N- to C-terminus: Phosphoenolpyruvate carboxykinase (ATP) (541 aa).

The substrate site is built by Arg-64, Tyr-206, and Lys-212. ATP-binding positions include Lys-212, His-231, and Gly-247–Thr-255. Residues Lys-212 and His-231 each contribute to the Mn(2+) site. A Mn(2+)-binding site is contributed by Asp-268. Positions 296, 332, and 454 each coordinate ATP. A substrate-binding site is contributed by Arg-332.

It belongs to the phosphoenolpyruvate carboxykinase (ATP) family. In terms of assembly, monomer. Requires Mn(2+) as cofactor.

The protein resides in the cytoplasm. It carries out the reaction oxaloacetate + ATP = phosphoenolpyruvate + ADP + CO2. Its pathway is carbohydrate biosynthesis; gluconeogenesis. Its function is as follows. Involved in the gluconeogenesis. Catalyzes the conversion of oxaloacetate (OAA) to phosphoenolpyruvate (PEP) through direct phosphoryl transfer between the nucleoside triphosphate and OAA. In Wigglesworthia glossinidia brevipalpis, this protein is Phosphoenolpyruvate carboxykinase (ATP).